Consider the following 125-residue polypeptide: UPF0102 protein Rpic_3463 (125 aa).

It belongs to the UPF0102 family.

This chain is UPF0102 protein Rpic_3463, found in Ralstonia pickettii (strain 12J).